The sequence spans 512 residues: Putative ribose/galactose/methyl galactoside import ATP-binding protein 1 (512 aa).

2 consecutive ABC transporter domains span residues 14 to 251 (IALT…VGRQ) and 262 to 507 (TSAN…TQRE). 46–53 (GENGAGKS) is a binding site for ATP.

The protein belongs to the ABC transporter superfamily. Carbohydrate importer 2 (CUT2) (TC 3.A.1.2) family.

Its subcellular location is the cell inner membrane. It catalyses the reaction D-ribose(out) + ATP + H2O = D-ribose(in) + ADP + phosphate + H(+). It carries out the reaction D-galactose(out) + ATP + H2O = D-galactose(in) + ADP + phosphate + H(+). Part of an ABC transporter complex involved in carbohydrate import. Could be involved in ribose, galactose and/or methyl galactoside import. Responsible for energy coupling to the transport system. This is Putative ribose/galactose/methyl galactoside import ATP-binding protein 1 from Burkholderia lata (strain ATCC 17760 / DSM 23089 / LMG 22485 / NCIMB 9086 / R18194 / 383).